The chain runs to 230 residues: Orotidine 5'-phosphate decarboxylase (230 aa).

Substrate-binding positions include D11, K34, 61 to 70 (DLKLHDIPNT), T117, R179, Q188, G208, and R209. Residue K63 is the Proton donor of the active site.

This sequence belongs to the OMP decarboxylase family. Type 1 subfamily. In terms of assembly, homodimer.

The catalysed reaction is orotidine 5'-phosphate + H(+) = UMP + CO2. The protein operates within pyrimidine metabolism; UMP biosynthesis via de novo pathway; UMP from orotate: step 2/2. Its function is as follows. Catalyzes the decarboxylation of orotidine 5'-monophosphate (OMP) to uridine 5'-monophosphate (UMP). This Streptococcus equi subsp. zooepidemicus (strain MGCS10565) protein is Orotidine 5'-phosphate decarboxylase.